We begin with the raw amino-acid sequence, 235 residues long: Large ribosomal subunit protein uL1 (235 aa).

It belongs to the universal ribosomal protein uL1 family. In terms of assembly, part of the 50S ribosomal subunit.

Its function is as follows. Binds directly to 23S rRNA. The L1 stalk is quite mobile in the ribosome, and is involved in E site tRNA release. In terms of biological role, protein L1 is also a translational repressor protein, it controls the translation of the L11 operon by binding to its mRNA. The polypeptide is Large ribosomal subunit protein uL1 (Nitratidesulfovibrio vulgaris (strain DSM 19637 / Miyazaki F) (Desulfovibrio vulgaris)).